Consider the following 1798-residue polypeptide: Focadhesin (1798 aa).

K816 is subject to N6-acetyllysine.

Interacts with VCL. As to expression, expressed by glial and neuronal cells in brain.

The protein localises to the cell junction. The protein resides in the focal adhesion. It is found in the cytoplasm. It localises to the cytosol. Its function is as follows. Required for the maintenance of SKIC2 and SKIC3 proteostatic levels in the liver. May be involved in the regulation of RNA degradation by the exosome complex. Potential tumor suppressor in gliomas. This is Focadhesin (Focad) from Mus musculus (Mouse).